A 460-amino-acid chain; its full sequence is Muscarinic acetylcholine receptor M1 (460 aa).

Topologically, residues 1–22 (MNTSAPPAVSPNITVLAPGKGP) are extracellular. Residues Asn2 and Asn12 are each glycosylated (N-linked (GlcNAc...) asparagine). A helical transmembrane segment spans residues 23–48 (WQVAFIGITTGLLSLATVTGNLLVLI). The Cytoplasmic portion of the chain corresponds to 49 to 62 (SFKVNTELKTVNNY). A helical membrane pass occupies residues 63–84 (FLLSLACADLIIGTFSMNLYTT). Residues 85–95 (YLLMGHWALGT) lie on the Extracellular side of the membrane. Residues 96–121 (LACDLWLALDYVASNASVMNLLLISF) form a helical membrane-spanning segment. The cysteines at positions 98 and 178 are disulfide-linked. Over 122-142 (DRYFSVTRPLSYRAKRTPRRA) the chain is Cytoplasmic. The chain crosses the membrane as a helical span at residues 143–164 (ALMIGLAWLVSFVLWAPAILFW). Residues 165–185 (QYLVGERTVLAGQCYIQFLSQ) are Extracellular-facing. A helical membrane pass occupies residues 186 to 209 (PIITFGTAMAAFYLPVTVMCTLYW). Residues 210–366 (RIYRETENRA…LVKEKKAART (157 aa)) lie on the Cytoplasmic side of the membrane. Disordered stretches follow at residues 225–259 (LQGS…PGRC), 273–297 (SWKE…EEPG), and 310–351 (EAQA…QLAK). Thr230 carries the phosphothreonine modification. A compositionally biased stretch (low complexity) spans 238-247 (SSSSERSQPG). The segment covering 328–343 (RPTKKGRDRAGKGQKP) has biased composition (basic residues). A helical membrane pass occupies residues 367–390 (LSAILLAFILTWTPYNIMVLVSTF). At 391 to 401 (CKDCVPETLWE) the chain is on the extracellular side. The helical transmembrane segment at 402–420 (LGYWLCYVNSTINPMCYAL) threads the bilayer. At 421–460 (CNKAFRDTFRLLLLCRWDKRRWRKIPKRPGSVHRTPSRQC) the chain is on the cytoplasmic side. Thr428 bears the Phosphothreonine mark. Position 451 is a phosphoserine (Ser451). The residue at position 455 (Thr455) is a Phosphothreonine. Ser457 carries the phosphoserine modification.

This sequence belongs to the G-protein coupled receptor 1 family. Muscarinic acetylcholine receptor subfamily. CHRM1 sub-subfamily. As to quaternary structure, interacts with GPRASP2. Interacts with TMEM147.

The protein localises to the cell membrane. It localises to the postsynaptic cell membrane. In terms of biological role, the muscarinic acetylcholine receptor mediates various cellular responses, including inhibition of adenylate cyclase, breakdown of phosphoinositides and modulation of potassium channels through the action of G proteins. Primary transducing effect is Pi turnover. This is Muscarinic acetylcholine receptor M1 (CHRM1) from Macaca mulatta (Rhesus macaque).